The primary structure comprises 587 residues: Phosphatidylinositol-3-phosphatase SAC1 (587 aa).

Residues 1–520 (MATAAYEQLK…SPLSVPRDWK (520 aa)) lie on the Cytoplasmic side of the membrane. An SAC domain is found at 122-451 (LNHVLNVDGF…ANACAKQYAG (330 aa)). The essential for phosphatidylinositol-4-phosphate phosphatase activity stretch occupies residues 452–587 (TGALKTDFTR…PRLVQKEKID (136 aa)). Position 456 is an N6-acetyllysine (K456). Residues 521-541 (FLALPIIMVVAFSMCIICLLM) form a helical membrane-spanning segment. Residues 542-548 (AGDTWTE) lie on the Lumenal side of the membrane. The helical transmembrane segment at 549–569 (TLAYVLFWGVASIGTFFIILY) threads the bilayer. Topologically, residues 570 to 587 (NGKDFVDAPRLVQKEKID) are cytoplasmic.

As to quaternary structure, interacts with TMEM39A. Interacts with SEC23A and SEC24A; this interaction is reduced in the absence of TMEM39A. Interacts with PLEKHA3 and VAPA and/or VAPB to form a ternary complex.

The protein localises to the endoplasmic reticulum membrane. The protein resides in the golgi apparatus membrane. It catalyses the reaction a 1,2-diacyl-sn-glycero-3-phospho-(1D-myo-inositol-3-phosphate) + H2O = a 1,2-diacyl-sn-glycero-3-phospho-(1D-myo-inositol) + phosphate. The enzyme catalyses a 1,2-diacyl-sn-glycero-3-phospho-(1D-myo-inositol 4-phosphate) + H2O = a 1,2-diacyl-sn-glycero-3-phospho-(1D-myo-inositol) + phosphate. Functionally, phosphoinositide phosphatase which catalyzes the hydrolysis of phosphatidylinositol 4-phosphate (PtdIns(4)P), phosphatidylinositol 3-phosphate (PtdIns(3)P) and has low activity towards phosphatidylinositol-3,5-bisphosphate (PtdIns(3,5)P2). Shows a very robust PtdIns(4)P phosphatase activity when it binds PtdIns(4)P in a 'cis' configuration in the cellular environment, with much less activity seen when it binds PtdIns(4)P in 'trans' configuration. PtdIns(4)P phosphatase activity (when it binds PtdIns(4)P in 'trans' configuration) is enhanced in the presence of PLEKHA3. The chain is Phosphatidylinositol-3-phosphatase SAC1 (SACM1L) from Pongo abelii (Sumatran orangutan).